Here is a 566-residue protein sequence, read N- to C-terminus: Membrane protein insertase YidC (566 aa).

5 consecutive transmembrane segments (helical) span residues 3–23, 346–366, 369–389, 436–456, and 509–529; these read IKRI…FNAW, GWLW…HAVV, WGWS…WFSA, GGCL…YVII, and MWIL…GLVL.

The protein belongs to the OXA1/ALB3/YidC family. Type 1 subfamily. Interacts with the Sec translocase complex via SecD. Specifically interacts with transmembrane segments of nascent integral membrane proteins during membrane integration.

It localises to the cell inner membrane. Functionally, required for the insertion and/or proper folding and/or complex formation of integral membrane proteins into the membrane. Involved in integration of membrane proteins that insert both dependently and independently of the Sec translocase complex, as well as at least some lipoproteins. Aids folding of multispanning membrane proteins. This Coxiella burnetii (strain RSA 331 / Henzerling II) protein is Membrane protein insertase YidC.